Reading from the N-terminus, the 91-residue chain is Early E3B 10.4 kDa protein (91 aa).

The signal sequence occupies residues 1-21; it reads MVTVLLIFLCLPVIFSSSTFA. Over 22-33 the chain is Lumenal; it reads AVSDLDPECLAP. Residues 34-56 form a helical membrane-spanning segment; that stretch reads FAVYLIFTFVTATCVCSIITLLI. Topologically, residues 57–91 are cytoplasmic; the sequence is TSLQFFDYYYVRIVYRRHHPRYQNPQIAALLQLQP.

This sequence belongs to the adenoviridae E3B family.

Its subcellular location is the host endoplasmic reticulum membrane. Functionally, down-regulates the EGF receptor. The chain is Early E3B 10.4 kDa protein from Homo sapiens (Human).